The chain runs to 356 residues: Cdc42 effector protein 4 (356 aa).

Position 5 is an N6-methyllysine (Lys5). Ser18 is modified (phosphoserine). One can recognise a CRIB domain in the interval Ile27 to Gly41. Residues Ser51 to Met102 are disordered. At Ser64 the chain carries Phosphoserine. The segment covering Leu78–Lys87 has biased composition (basic residues). Ser105, Ser109, and Ser118 each carry phosphoserine. 2 disordered regions span residues Leu122–Gln182 and Val257–Val356. Over residues Asn123–Thr132 the composition is skewed to basic and acidic residues. Residues Ser133 to Pro143 are compositionally biased toward low complexity. Ser138, Ser140, Ser142, Ser174, Ser292, and Ser295 each carry phosphoserine. Low complexity predominate over residues Ala287–Ser315. A compositionally biased stretch (basic and acidic residues) spans Leu318–Ser344. The segment covering Phe345–Val356 has biased composition (acidic residues).

This sequence belongs to the BORG/CEP family. As to quaternary structure, interacts with CDC42 and RHOQ, in a GTP-dependent manner. Not detected in any of the adult tissues tested. May be expressed only in fetal or embryonic tissues.

It is found in the endomembrane system. Its subcellular location is the cytoplasm. The protein resides in the cytoskeleton. Functionally, probably involved in the organization of the actin cytoskeleton. May act downstream of CDC42 to induce actin filament assembly leading to cell shape changes. Induces pseudopodia formation, when overexpressed in fibroblasts. In Homo sapiens (Human), this protein is Cdc42 effector protein 4 (CDC42EP4).